A 379-amino-acid polypeptide reads, in one-letter code: MAKEPVRVLVTGAAGNQEPILVKEESVVGIPTPLLKLKSWQWWVLVSVNIFFLIGGQAASVLLGRFYYDEGGNSKWMATLVQTAAFPILYIPLLLLPSSASVESSESSCSLKYIVLIYVLLGVIIAGDNMLYSVGLLYLSASTYSLICATQLAFNAVFSYFINAQKFTALILNSVVLLSFSAALIALNDDADTPSGVSRSKYIVGFVCTLAASALYSLLLSLMQFSFEKILKRETFSVVLEMQIYTSLVATCVSVIGLFASGEWRTLHGEMEGYHKGQASYVLTLVWTAVTWQVCSVGVVGLIFLVTSLFSNVISTLSLAVTPLAALVVFRDKMSGVKIMAMLIAIWGFASYVYQNHIDDLKVRQARQQAQAGRVEPPC.

10 helical membrane passes run 43–63 (WVLV…SVLL), 76–96 (WMAT…LLLL), 114–134 (IVLI…LYSV), 144–164 (YSLI…FINA), 167–187 (FTAL…LIAL), 203–223 (IVGF…LSLM), 239–259 (VLEM…IGLF), 294–313 (VCSV…FSNV), 314–330 (ISTL…LVVF), and 334–354 (MSGV…SYVY).

It belongs to the purine permeases (TC 2.A.7.14) family. As to quaternary structure, may form a complex with the potassium channel subunit KAT1.

Its subcellular location is the membrane. This is Probable purine permease 11 (PUP11) from Arabidopsis thaliana (Mouse-ear cress).